We begin with the raw amino-acid sequence, 166 residues long: Small ribosomal subunit protein uS5 (166 aa).

In terms of domain architecture, S5 DRBM spans 11 to 74 (LQEKLISVNR…DKARKNMIII (64 aa)).

This sequence belongs to the universal ribosomal protein uS5 family. Part of the 30S ribosomal subunit. Contacts proteins S4 and S8.

Its function is as follows. With S4 and S12 plays an important role in translational accuracy. Located at the back of the 30S subunit body where it stabilizes the conformation of the head with respect to the body. The protein is Small ribosomal subunit protein uS5 of Wigglesworthia glossinidia brevipalpis.